Reading from the N-terminus, the 373-residue chain is Transaldolase (373 aa).

The Schiff-base intermediate with substrate role is filled by Lys143.

This sequence belongs to the transaldolase family. Type 2 subfamily.

The protein localises to the cytoplasm. It carries out the reaction D-sedoheptulose 7-phosphate + D-glyceraldehyde 3-phosphate = D-erythrose 4-phosphate + beta-D-fructose 6-phosphate. The protein operates within carbohydrate degradation; pentose phosphate pathway; D-glyceraldehyde 3-phosphate and beta-D-fructose 6-phosphate from D-ribose 5-phosphate and D-xylulose 5-phosphate (non-oxidative stage): step 2/3. In terms of biological role, transaldolase is important for the balance of metabolites in the pentose-phosphate pathway. The protein is Transaldolase of Mycolicibacterium paratuberculosis (strain ATCC BAA-968 / K-10) (Mycobacterium paratuberculosis).